The chain runs to 1023 residues: StAR-related lipid transfer protein 8 (1023 aa).

Disordered stretches follow at residues 46 to 67 and 82 to 161; these read PMGSSDLLAPPSPGLPATSSCE and TVSL…KVSK. The segment covering 99 to 114 has biased composition (polar residues); that stretch reads PSSSDRPLLSPTQGQE. Position 108 is a phosphoserine (S108). Basic residues predominate over residues 120–130; the sequence is AKKRHRNRSFL. Polar residues predominate over residues 143–161; it reads GSQQAEPKHSPATSEKVSK. R169 is subject to Asymmetric dimethylarginine. Phosphoserine occurs at positions 235 and 238. Residues 387–397 show a composition bias toward low complexity; the sequence is PAQAPAEAEPV. Disordered stretches follow at residues 387-461 and 467-486; these read PAQA…MNEA and LAGLQASMPRERRDSGVGAS. Residues 441-459 show a composition bias toward polar residues; it reads ISDTVASSSELDSSGNSMN. S498 and S506 each carry phosphoserine. The Rho-GAP domain occupies 573–777; it reads PPLIHVQRTG…HMISDCKKLF (205 aa). The interval 733 to 757 is disordered; sequence KKDSPSPRIKSKRSLIGRPGPRDLS. The START domain occupies 809–1017; that stretch reads AQAAGVSLSL…RDSFPTLQAA (209 aa).

Binds both the SH2 and PTB domains of TNS1. As to expression, widely expressed with highest levels in kidney, lung and placenta.

It is found in the cell junction. It localises to the focal adhesion. Its function is as follows. Accelerates GTPase activity of RHOA and CDC42, but not RAC1. Stimulates the hydrolysis of phosphatidylinositol 4,5-bisphosphate by PLCD1. This is StAR-related lipid transfer protein 8 (STARD8) from Homo sapiens (Human).